We begin with the raw amino-acid sequence, 315 residues long: MPGLSCRFYQHKFPEVEDVVMVNVRSIAEMGAYVSLLEYNNIEGMILLSELSRRRIRSINKLIRIGRNECVVVIRVDKEKGYIDLSKRRVSPEEAIKCEDKFTKSKTVYSILRHVAEVLEYTKDEQLESLFQRTAWVFDDKYKRPGYGAYDAFKHAVSDPSILDSLDLNEDEREVLINNINRRLTPQAVKIRADIEVACYGYEGIDAVKEALRAGLNCSTETMPIKINLIAPPRYVMTTTTLERTEGLSVLNQAMAVIKEKIEEKRGVFNVQMEPKVVTDTDETELARQLERLERENAEVDGDDDAEEMEAKAED.

An S1 motif domain is found at 17 to 88 (EDVVMVNVRS…EKGYIDLSKR (72 aa)). A Phosphoserine; by HRI modification is found at Ser-49. Ser-52 carries the post-translational modification Phosphoserine. Lys-141 is subject to N6-acetyllysine. The residue at position 158 (Ser-158) is a Phosphoserine. Phosphothreonine occurs at positions 279 and 281. The segment at 292-315 (RLERENAEVDGDDDAEEMEAKAED) is disordered. Positions 299–308 (EVDGDDDAEE) are enriched in acidic residues.

The protein belongs to the eIF-2-alpha family. As to quaternary structure, eukaryotic translation initiation factor 2 eIF2 is a heterotrimeric complex composed of an alpha (EIF2S1), a beta (EIF2S2) and a gamma (EIF2S3) chain. eIF2 is member of the 43S pre-initiation complex (43S PIC). eIF2 forms a complex with at least CELF1/CUGBP1, CALR, CALR3, EIF2S1, EIF2S2, HSP90B1 and HSPA5. Interaction with METAP2 protects EIF2S1 from inhibitory phosphorylation. Interacts with ABCF1. Associates with ribosomes. Interacts with DDX3X in an RNA-independent manner. Phosphorylation at Ser-49 and Ser-52 stabilizes the eIF-2/GDP/eIF2B complex and prevents GDP/GTP exchange reaction, thus impairing the recycling of eIF-2 between successive rounds of initiation and leading to global inhibition of translation, while concomitantly initiating the preferential translation of integrated stress response (ISR)-specific mRNAs. Substrate for at least 4 kinases: EIF2AK1/HRI, EIF2AK2/PKR, EIF2AK3/PERK and EIF2AK4/GCN2. Phosphorylation at Ser-52 by the EIF2AK3/PERK protein kinase occurs in response to the unfolded protein response. Phosphorylation on Ser-52 by the EIF2AK4/GCN2 protein kinase occurs in response to amino acid starvation and UV irradiation. Phosphorylation at Ser-52 by EIF2AK1/HRI in response to mitochondrial damage promotes relocalization to the mitochondrial surface.

Its subcellular location is the cytoplasm. The protein resides in the stress granule. It is found in the cytosol. It localises to the mitochondrion. Its activity is regulated as follows. Activity is regulated by phosphorylation at Ser-49 and Ser-52, which stabilizes the eIF2/GDP/eIF2B complex and prevents the eIF2B-mediated exchange of GDP for GTP, thereby preventing the formation of the 43S pre-initiation complex (43S PIC). This results in the global attenuation of 5' cap-dependent protein synthesis and concomitant translation of ISR-specific mRNAs that contain a short upstream open reading frame (uORF) in their 5' UTR, such as ATF4, ATF5, DDIT3/CHOP and PPP1R15A/GADD34. In terms of biological role, member of the eIF2 complex that functions in the early steps of protein synthesis by forming a ternary complex with GTP and initiator tRNA. This complex binds to a 40S ribosomal subunit, followed by mRNA binding to form a 43S pre-initiation complex. Junction of the 60S ribosomal subunit to form the 80S initiation complex is preceded by hydrolysis of the GTP bound to eIF2 and release of an eIF2-GDP binary complex. In order for eIF2 to recycle and catalyze another round of initiation, the GDP bound to eIF2 must exchange with GTP by way of a reaction catalyzed by eIF2B. EIF2S1/eIF2-alpha is a key component of the integrated stress response (ISR), required for adaptation to various stress: phosphorylation by metabolic-stress sensing protein kinases (EIF2AK1/HRI, EIF2AK2/PKR, EIF2AK3/PERK and EIF2AK4/GCN2) in response to stress converts EIF2S1/eIF2-alpha in a global protein synthesis inhibitor, leading to a attenuation of cap-dependent translation, while concomitantly initiating the preferential translation of ISR-specific mRNAs, such as the transcriptional activators ATF4 and QRICH1, and hence allowing ATF4- and QRICH1-mediated reprogramming. EIF2S1/eIF2-alpha also acts as an activator of mitophagy in response to mitochondrial damage: phosphorylation by EIF2AK1/HRI promotes relocalization to the mitochondrial surface, thereby triggering PRKN-independent mitophagy. The protein is Eukaryotic translation initiation factor 2 subunit 1 (EIF2S1) of Sus scrofa (Pig).